Here is a 218-residue protein sequence, read N- to C-terminus: Pyridoxine/pyridoxamine 5'-phosphate oxidase (218 aa).

Residues 12 to 15 (RLAY) and R70 each bind substrate. FMN is bound by residues 65–70 (RTVLLR), 80–81 (YT), K87, and Q109. Residues Y127, R131, and S135 each contribute to the substrate site. FMN contacts are provided by residues 145-146 (QS) and W191. Position 197–199 (197–199 (RLH)) interacts with substrate. R201 lines the FMN pocket.

Belongs to the pyridoxamine 5'-phosphate oxidase family. As to quaternary structure, homodimer. Requires FMN as cofactor.

The enzyme catalyses pyridoxamine 5'-phosphate + O2 + H2O = pyridoxal 5'-phosphate + H2O2 + NH4(+). It catalyses the reaction pyridoxine 5'-phosphate + O2 = pyridoxal 5'-phosphate + H2O2. It functions in the pathway cofactor metabolism; pyridoxal 5'-phosphate salvage; pyridoxal 5'-phosphate from pyridoxamine 5'-phosphate: step 1/1. The protein operates within cofactor metabolism; pyridoxal 5'-phosphate salvage; pyridoxal 5'-phosphate from pyridoxine 5'-phosphate: step 1/1. In terms of biological role, catalyzes the oxidation of either pyridoxine 5'-phosphate (PNP) or pyridoxamine 5'-phosphate (PMP) into pyridoxal 5'-phosphate (PLP). The polypeptide is Pyridoxine/pyridoxamine 5'-phosphate oxidase (Deinococcus geothermalis (strain DSM 11300 / CIP 105573 / AG-3a)).